The primary structure comprises 1038 residues: SEH-associated protein 4 (1038 aa).

The WD 1 repeat unit spans residues 50–90; sequence KDFGSITCLDYSESEIGMIGVGEKNGYLRIFNISGQNSSSP. Ser123 and Ser136 each carry phosphoserine. WD repeat units lie at residues 147–189, 235–276, and 544–587; these read KKQR…DSHE, QHPT…DQAS, and NTWR…SNQD.

This sequence belongs to the WD repeat mio family. In terms of assembly, component of the SEA complex composed of at least IML1/SEA1, RTC1/SEA2, MTC5/SEA3, NPR2, NPR3, SEA4, SEC13 and SEH1.

The protein resides in the cytoplasm. It is found in the vacuole membrane. Component of the SEA complex which coats the vacuolar membrane and is involved in intracellular trafficking, autophagy, response to nitrogen starvation, and amino acid biogenesis. This Saccharomyces cerevisiae (strain ATCC 204508 / S288c) (Baker's yeast) protein is SEH-associated protein 4 (SEA4).